We begin with the raw amino-acid sequence, 380 residues long: Queuine tRNA-ribosyltransferase (380 aa).

The active-site Proton acceptor is the Asp-96. Substrate-binding positions include 96–100 (DSGGF), Asp-150, Gln-193, and Gly-220. The tract at residues 251-257 (GVGAPDS) is RNA binding. Residue Asp-270 is the Nucleophile of the active site. Residues 275–279 (TRIAR) are RNA binding; important for wobble base 34 recognition. Zn(2+) is bound by residues Cys-308, Cys-310, Cys-313, and His-339.

This sequence belongs to the queuine tRNA-ribosyltransferase family. Homodimer. Within each dimer, one monomer is responsible for RNA recognition and catalysis, while the other monomer binds to the replacement base PreQ1. Zn(2+) is required as a cofactor.

It catalyses the reaction 7-aminomethyl-7-carbaguanine + guanosine(34) in tRNA = 7-aminomethyl-7-carbaguanosine(34) in tRNA + guanine. Its pathway is tRNA modification; tRNA-queuosine biosynthesis. In terms of biological role, catalyzes the base-exchange of a guanine (G) residue with the queuine precursor 7-aminomethyl-7-deazaguanine (PreQ1) at position 34 (anticodon wobble position) in tRNAs with GU(N) anticodons (tRNA-Asp, -Asn, -His and -Tyr). Catalysis occurs through a double-displacement mechanism. The nucleophile active site attacks the C1' of nucleotide 34 to detach the guanine base from the RNA, forming a covalent enzyme-RNA intermediate. The proton acceptor active site deprotonates the incoming PreQ1, allowing a nucleophilic attack on the C1' of the ribose to form the product. After dissociation, two additional enzymatic reactions on the tRNA convert PreQ1 to queuine (Q), resulting in the hypermodified nucleoside queuosine (7-(((4,5-cis-dihydroxy-2-cyclopenten-1-yl)amino)methyl)-7-deazaguanosine). The sequence is that of Queuine tRNA-ribosyltransferase from Streptococcus pyogenes serotype M1.